A 608-amino-acid polypeptide reads, in one-letter code: Glutamine--fructose-6-phosphate aminotransferase [isomerizing] (608 aa).

Catalysis depends on Cys-2, which acts as the Nucleophile; for GATase activity. A Glutamine amidotransferase type-2 domain is found at 2-217; that stretch reads CGIVGILGRE…DGDWVVLTRN (216 aa). SIS domains are found at residues 284-423 and 456-598; these read LPFD…ARGE and LARE…VDQP. Lys-603 serves as the catalytic For Fru-6P isomerization activity.

As to quaternary structure, homodimer.

The protein localises to the cytoplasm. The catalysed reaction is D-fructose 6-phosphate + L-glutamine = D-glucosamine 6-phosphate + L-glutamate. Its function is as follows. Catalyzes the first step in hexosamine metabolism, converting fructose-6P into glucosamine-6P using glutamine as a nitrogen source. In Bradyrhizobium diazoefficiens (strain JCM 10833 / BCRC 13528 / IAM 13628 / NBRC 14792 / USDA 110), this protein is Glutamine--fructose-6-phosphate aminotransferase [isomerizing] (glmS).